The following is a 304-amino-acid chain: MRLPIFLDTDPGIDDAVAIAAAIFAPELDLQLMTTVAGNVSVEKTTRNALQLLHFWNAEIPLAQGAAVPLVRAPRDAASVHGESGMAGYDFVEHNRKPLGIPAFLAIRDALMRAPEPVTLVAIGPLTNIALLLSQCPECKPYIRRLVIMGGSAGRGNCTPNAEFNIAVDPEAAACVFRSGIEIVMCGLDVTNQAILTPDYLATLPELNRTGKMLHALFSHYRSGSMQSGLRMHDLCAIAWLVRPELFTLKPCFVAVETQGEFTSGTTVVDIDGCLDKPANVQVALELDVKGFQQWVAEVLALAS.

H233 is an active-site residue.

It belongs to the IUNH family. RihC subfamily.

In terms of biological role, hydrolyzes both purine and pyrimidine ribonucleosides with a broad-substrate specificity. The sequence is that of Non-specific ribonucleoside hydrolase RihC from Escherichia coli O7:K1 (strain IAI39 / ExPEC).